Consider the following 138-residue polypeptide: Small ribosomal subunit protein bS16 (138 aa).

A disordered region spans residues 92–138 (QAAKREADAKQAAKEAAEAKAAAEAEAKAAAEAESADAGAEEAPAEA). The span at 94–122 (AKREADAKQAAKEAAEAKAAAEAEAKAAA) shows a compositional bias: basic and acidic residues.

Belongs to the bacterial ribosomal protein bS16 family.

The protein is Small ribosomal subunit protein bS16 of Synechococcus sp. (strain WH7803).